Reading from the N-terminus, the 201-residue chain is Recombination protein RecR (201 aa).

The C4-type zinc finger occupies 59–74 (CSRCQNFCEAELCSIC). Positions 82–177 (RVLCVVESPT…PVSRIAHGIP (96 aa)) constitute a Toprim domain.

The protein belongs to the RecR family.

May play a role in DNA repair. It seems to be involved in an RecBC-independent recombinational process of DNA repair. It may act with RecF and RecO. This is Recombination protein RecR from Hahella chejuensis (strain KCTC 2396).